The sequence spans 245 residues: Ribonuclease 3 (245 aa).

In terms of domain architecture, RNase III spans 24–146; the sequence is YAVFLQKLGY…IIGAIYLESG (123 aa). A Mg(2+)-binding site is contributed by Glu59. Residue Asp63 is part of the active site. Mg(2+) contacts are provided by Asn132 and Glu135. The active site involves Glu135. The region spanning 173 to 243 is the DRBM domain; it reads DSKTLLQEYL…ARQAYELAIV (71 aa).

The protein belongs to the ribonuclease III family. Homodimer. Mg(2+) is required as a cofactor.

It is found in the cytoplasm. It catalyses the reaction Endonucleolytic cleavage to 5'-phosphomonoester.. Digests double-stranded RNA. Involved in the processing of primary rRNA transcript to yield the immediate precursors to the large and small rRNAs (23S and 16S). Processes some mRNAs, and tRNAs when they are encoded in the rRNA operon. Processes pre-crRNA and tracrRNA of type II CRISPR loci if present in the organism. This chain is Ribonuclease 3, found in Nitrosomonas europaea (strain ATCC 19718 / CIP 103999 / KCTC 2705 / NBRC 14298).